Consider the following 203-residue polypeptide: Holliday junction branch migration complex subunit RuvA (203 aa).

The segment at 1–64 (MIGRLRGIII…EDAQLLYGFN (64 aa)) is domain I. The tract at residues 65 to 142 (NKQERTLFKE…KGLHGDLFTP (78 aa)) is domain II. The interval 143 to 154 (AADLVLTSPASP) is flexible linker. Residues 155 to 203 (ATDDAEQEAVAALVALGYKPQEASRMVSKIARPDASSETLIREALRAAL) form a domain III region.

Belongs to the RuvA family. As to quaternary structure, homotetramer. Forms an RuvA(8)-RuvB(12)-Holliday junction (HJ) complex. HJ DNA is sandwiched between 2 RuvA tetramers; dsDNA enters through RuvA and exits via RuvB. An RuvB hexamer assembles on each DNA strand where it exits the tetramer. Each RuvB hexamer is contacted by two RuvA subunits (via domain III) on 2 adjacent RuvB subunits; this complex drives branch migration. In the full resolvosome a probable DNA-RuvA(4)-RuvB(12)-RuvC(2) complex forms which resolves the HJ.

It is found in the cytoplasm. Functionally, the RuvA-RuvB-RuvC complex processes Holliday junction (HJ) DNA during genetic recombination and DNA repair, while the RuvA-RuvB complex plays an important role in the rescue of blocked DNA replication forks via replication fork reversal (RFR). RuvA specifically binds to HJ cruciform DNA, conferring on it an open structure. The RuvB hexamer acts as an ATP-dependent pump, pulling dsDNA into and through the RuvAB complex. HJ branch migration allows RuvC to scan DNA until it finds its consensus sequence, where it cleaves and resolves the cruciform DNA. The sequence is that of Holliday junction branch migration complex subunit RuvA from Shigella boydii serotype 18 (strain CDC 3083-94 / BS512).